Here is a 91-residue protein sequence, read N- to C-terminus: Elongation factor 1-beta (91 aa).

It belongs to the EF-1-beta/EF-1-delta family.

Functionally, promotes the exchange of GDP for GTP in EF-1-alpha/GDP, thus allowing the regeneration of EF-1-alpha/GTP that could then be used to form the ternary complex EF-1-alpha/GTP/AAtRNA. This is Elongation factor 1-beta from Thermofilum pendens (strain DSM 2475 / Hrk 5).